We begin with the raw amino-acid sequence, 86 residues long: Large ribosomal subunit protein bL27 (86 aa).

Residues 1-24 are disordered; that stretch reads MAHKKAGGSSRNGRDSEGRRLGVK.

It belongs to the bacterial ribosomal protein bL27 family.

This Magnetococcus marinus (strain ATCC BAA-1437 / JCM 17883 / MC-1) protein is Large ribosomal subunit protein bL27.